A 219-amino-acid chain; its full sequence is Acetylxylan esterase (219 aa).

The active-site Nucleophile is Ser15. Residues Asp191 and His194 each act as charge relay system in the active site.

It belongs to the 'GDSL' lipolytic enzyme family. As to quaternary structure, homooctamer, presenting a unique donut-shaped quaternary structure built of two staggered tetrameric rings. The eight active sites are organized in four closely situated pairs, which face the relatively wide internal cavity.

It is found in the cytoplasm. The catalysed reaction is Deacetylation of xylans and xylo-oligosaccharides.. It functions in the pathway glycan degradation; xylan degradation. In terms of biological role, acetylxylan esterase involved in the degradation of xylan, a major structural heterogeneous polysaccharide found in plant biomass representing the second most abundant polysaccharide in the biosphere, after cellulose. Cleaves acetyl side groups from the xylose backbone units of the hemicellulolytic polymer xylan and xylo-oligosaccharides. Hydrolyzes about 20%-30% of the available acetyl groups on fully acetylated birch wood xylan. Completely deacetylates xylobiose peracetate (fully acetylated), and is active on both the alpha- and beta-forms of the sugar. Also hydrolyzes fully acetylated methyl-beta-D-xylopyranoside and methyl-beta-D-glucopyranoside, and the synthetic substrates 2-naphthyl acetate, 4-nitrophenyl acetate, 4-methylumbelliferyl acetate, and phenyl acetate. The chain is Acetylxylan esterase from Geobacillus stearothermophilus (Bacillus stearothermophilus).